A 377-amino-acid polypeptide reads, in one-letter code: uncharacterized protein (377 aa).

Residues 1-25 are disordered; the sequence is MAQQTNVAGQKTEKQRKAPFRADHV. A compositionally biased stretch (basic and acidic residues) spans 11–24; it reads KTEKQRKAPFRADH.

This sequence to B.subtilis YxjG.

This is an uncharacterized protein from Bacillus subtilis (strain 168).